The sequence spans 184 residues: Elongation factor P (184 aa).

Belongs to the elongation factor P family.

It localises to the cytoplasm. Its pathway is protein biosynthesis; polypeptide chain elongation. Functionally, involved in peptide bond synthesis. Stimulates efficient translation and peptide-bond synthesis on native or reconstituted 70S ribosomes in vitro. Probably functions indirectly by altering the affinity of the ribosome for aminoacyl-tRNA, thus increasing their reactivity as acceptors for peptidyl transferase. The polypeptide is Elongation factor P (Thermus thermophilus (strain ATCC BAA-163 / DSM 7039 / HB27)).